Here is a 344-residue protein sequence, read N- to C-terminus: Succinylglutamate desuccinylase (344 aa).

The Zn(2+) site is built by His-63, Glu-66, and His-160. Glu-224 is a catalytic residue.

It belongs to the AspA/AstE family. Succinylglutamate desuccinylase subfamily. Zn(2+) is required as a cofactor.

The enzyme catalyses N-succinyl-L-glutamate + H2O = L-glutamate + succinate. It participates in amino-acid degradation; L-arginine degradation via AST pathway; L-glutamate and succinate from L-arginine: step 5/5. In terms of biological role, transforms N(2)-succinylglutamate into succinate and glutamate. This Shewanella putrefaciens (strain CN-32 / ATCC BAA-453) protein is Succinylglutamate desuccinylase.